The sequence spans 336 residues: Holliday junction branch migration complex subunit RuvB (336 aa).

Positions 1-183 (MTEEHLTSQE…FGIVEHMQYY (183 aa)) are large ATPase domain (RuvB-L). ATP contacts are provided by residues Leu22, Arg23, Gly64, Lys67, Thr68, Thr69, 130–132 (EDF), Arg173, Tyr183, and Arg220. A Mg(2+)-binding site is contributed by Thr68. Residues 184–254 (QVEDLEKIIL…TTAMALKQLQ (71 aa)) form a small ATPAse domain (RuvB-S) region. The tract at residues 257-336 (SAGLDQTDRK…LNLPLPGEEE (80 aa)) is head domain (RuvB-H). 2 residues coordinate DNA: Arg293 and Arg317.

Belongs to the RuvB family. As to quaternary structure, homohexamer. Forms an RuvA(8)-RuvB(12)-Holliday junction (HJ) complex. HJ DNA is sandwiched between 2 RuvA tetramers; dsDNA enters through RuvA and exits via RuvB. An RuvB hexamer assembles on each DNA strand where it exits the tetramer. Each RuvB hexamer is contacted by two RuvA subunits (via domain III) on 2 adjacent RuvB subunits; this complex drives branch migration. In the full resolvosome a probable DNA-RuvA(4)-RuvB(12)-RuvC(2) complex forms which resolves the HJ.

Its subcellular location is the cytoplasm. It catalyses the reaction ATP + H2O = ADP + phosphate + H(+). In terms of biological role, the RuvA-RuvB-RuvC complex processes Holliday junction (HJ) DNA during genetic recombination and DNA repair, while the RuvA-RuvB complex plays an important role in the rescue of blocked DNA replication forks via replication fork reversal (RFR). RuvA specifically binds to HJ cruciform DNA, conferring on it an open structure. The RuvB hexamer acts as an ATP-dependent pump, pulling dsDNA into and through the RuvAB complex. RuvB forms 2 homohexamers on either side of HJ DNA bound by 1 or 2 RuvA tetramers; 4 subunits per hexamer contact DNA at a time. Coordinated motions by a converter formed by DNA-disengaged RuvB subunits stimulates ATP hydrolysis and nucleotide exchange. Immobilization of the converter enables RuvB to convert the ATP-contained energy into a lever motion, pulling 2 nucleotides of DNA out of the RuvA tetramer per ATP hydrolyzed, thus driving DNA branch migration. The RuvB motors rotate together with the DNA substrate, which together with the progressing nucleotide cycle form the mechanistic basis for DNA recombination by continuous HJ branch migration. Branch migration allows RuvC to scan DNA until it finds its consensus sequence, where it cleaves and resolves cruciform DNA. This is Holliday junction branch migration complex subunit RuvB from Lactobacillus delbrueckii subsp. bulgaricus (strain ATCC 11842 / DSM 20081 / BCRC 10696 / JCM 1002 / NBRC 13953 / NCIMB 11778 / NCTC 12712 / WDCM 00102 / Lb 14).